The following is a 464-amino-acid chain: Chromosomal replication initiator protein DnaA (464 aa).

The domain I, interacts with DnaA modulators stretch occupies residues 1 to 82 (MKNAAELWHN…GSRLDIQFIE (82 aa)). Residues 82-125 (EEGQAKHMLDRQNEEVEVMEVAPAKTKAQKTPKSSDELVMSELG) are domain II. Residues 126–342 (QLNEKYTFDT…GALTRVIAYA (217 aa)) are domain III, AAA+ region. ATP contacts are provided by G170, G172, K173, and T174. The domain IV, binds dsDNA stretch occupies residues 343–464 (NLVGRTIDPN…EQIKHELKHS (122 aa)).

It belongs to the DnaA family. In terms of assembly, oligomerizes as a right-handed, spiral filament on DNA at oriC.

It is found in the cytoplasm. Plays an essential role in the initiation and regulation of chromosomal replication. ATP-DnaA binds to the origin of replication (oriC) to initiate formation of the DNA replication initiation complex once per cell cycle. Binds the DnaA box (a 9 base pair repeat at the origin) and separates the double-stranded (ds)DNA. Forms a right-handed helical filament on oriC DNA; dsDNA binds to the exterior of the filament while single-stranded (ss)DNA is stabiized in the filament's interior. The ATP-DnaA-oriC complex binds and stabilizes one strand of the AT-rich DNA unwinding element (DUE), permitting loading of DNA polymerase. After initiation quickly degrades to an ADP-DnaA complex that is not apt for DNA replication. Binds acidic phospholipids. The chain is Chromosomal replication initiator protein DnaA from Exiguobacterium sibiricum (strain DSM 17290 / CCUG 55495 / CIP 109462 / JCM 13490 / 255-15).